Consider the following 297-residue polypeptide: CASP-like protein 4A2 (297 aa).

The segment at 1 to 136 (MKMKRTVSSN…MNGEESATTA (136 aa)) is disordered. Residues 1-149 (MKMKRTVSSN…ARRDDLVSVT (149 aa)) are Cytoplasmic-facing. The segment covering 8–19 (SSNSEAYSYNES) has biased composition (low complexity). The segment covering 69 to 83 (LPSPIPPPPPQIPPP) has biased composition (pro residues). Over residues 93–121 (MNSSLDKSPSSMVVQNSWVREDGQQNTTR) the composition is skewed to polar residues. Residues 150-170 (ALGFRITEVILCVISFSIMAA) form a helical membrane-spanning segment. Residues 171 to 189 (DKTQGWSGDSYDRYKEYRY) are Extracellular-facing. Residues 190-210 (CLAVNVIAFVYSAFEACDAAC) form a helical membrane-spanning segment. Residues 211–225 (YMAKESYMMNCGFHD) lie on the Cytoplasmic side of the membrane. The chain crosses the membrane as a helical span at residues 226–246 (LFVFSMDQLLAYLLMSASSCA). Residues 247 to 265 (ATRVDDWVSNWGKDEFTQM) are Extracellular-facing. The chain crosses the membrane as a helical span at residues 266-286 (ATASIAVSFLAFGAFAVSALI). The Cytoplasmic portion of the chain corresponds to 287–297 (SSYRLFTHASS).

It belongs to the Casparian strip membrane proteins (CASP) family. Homodimer and heterodimers.

Its subcellular location is the cell membrane. This chain is CASP-like protein 4A2, found in Arabidopsis lyrata subsp. lyrata (Lyre-leaved rock-cress).